A 241-amino-acid polypeptide reads, in one-letter code: Pre-rRNA-processing protein pno1 (241 aa).

Residues 48 to 71 form a disordered region; it reads APAKTSAEKKRGAKPQMRRVPIPP. The residue at position 52 (T52) is a Phosphothreonine. The region spanning 162–214 is the KH domain; that stretch reads GDHLSRAIGRIAGQGGKTKFAIENASRTRIVLADSKIHILGGFTNIRIAKDAV.

The protein belongs to the PNO1 family. As to quaternary structure, component of the small ribosomal subunit, ribosomal RNA processing complex (SSU RRP complex).

Its subcellular location is the cytoplasm. It localises to the nucleus. The protein resides in the nucleolus. Its function is as follows. Required for small ribosomal subunit (SSU) synthesis. Has a role in the processing of early nucleolar and late cytoplasmic pre-RNA species. The chain is Pre-rRNA-processing protein pno1 (rbp28) from Schizosaccharomyces pombe (strain 972 / ATCC 24843) (Fission yeast).